We begin with the raw amino-acid sequence, 579 residues long: Potassium-transporting ATPase potassium-binding subunit (579 aa).

The next 10 helical transmembrane spans lie at 2–22 (MNLVLQYGLYILILVVLAIPL), 66–86 (SFSVLAFSIISLIVLFLIHIF), 135–155 (GLTVQNFVSAAVGISVLFALI), 177–197 (VLYILIPLSIVVSLALVSQGV), 262–282 (LSNLFEMISLLLIPVALCFTF), 292–312 (GIAIFIAMGIMLVVAMGIIGV), 391–411 (VFGGVGCGLYGMIGFAILAVF), 437–457 (VLVCLATPIAILIGSGIASIL), 490–510 (FAGFAANTPFINISIGLSMLF), and 546–566 (FIGLLIFVVLLIGALSFFPAL).

This sequence belongs to the KdpA family. In terms of assembly, the system is composed of three essential subunits: KdpA, KdpB and KdpC.

It localises to the cell membrane. Its function is as follows. Part of the high-affinity ATP-driven potassium transport (or Kdp) system, which catalyzes the hydrolysis of ATP coupled with the electrogenic transport of potassium into the cytoplasm. This subunit binds the extracellular potassium ions and delivers the ions to the membrane domain of KdpB through an intramembrane tunnel. This Clostridium botulinum (strain Alaska E43 / Type E3) protein is Potassium-transporting ATPase potassium-binding subunit.